Reading from the N-terminus, the 86-residue chain is Mu-theraphotoxin-Hhn1b 1 (86 aa).

The first 21 residues, 1–21 (MKASMFLALAGLALLFVVCYA), serve as a signal peptide directing secretion. Positions 22 to 49 (SESEEKEFSNELLSSVLAVDDNSKGEER) are excised as a propeptide. 3 disulfides stabilise this stretch: Cys-51-Cys-66, Cys-58-Cys-73, and Cys-65-Cys-80. Ile-84 carries the post-translational modification Isoleucine amide.

Belongs to the neurotoxin 10 (Hwtx-1) family. 22 (Htx-4) subfamily. In terms of assembly, monomer. In terms of tissue distribution, expressed by the venom gland.

It localises to the secreted. Its function is as follows. Neurotoxin that selectively inhibits neuronal tetrodotoxin-sensitive voltage-gated sodium channels (Nav) (IC(50)=44.6 nM). It is active on Nav1.2/SCN2A (IC(50)=22.4 nM), Nav1.6/SCN8A (IC(50)=50.1 nM) and Nav1.7/SCN9A (IC(50)=48.9 nM). It shows low affinity for lipid bilayers. The protein is Mu-theraphotoxin-Hhn1b 1 of Cyriopagopus hainanus (Chinese bird spider).